Here is a 106-residue protein sequence, read N- to C-terminus: Putative protein SH (106 aa).

The segment at 48–106 is disordered; that stretch reads HSQQNNSGHQFGDRFHSKGHQDTEGRILWKEASTRTTDSTETADTQLVQRQGNGGICLS. The segment covering 58–80 has biased composition (basic and acidic residues); it reads FGDRFHSKGHQDTEGRILWKEAS. The span at 81 to 92 shows a compositional bias: low complexity; that stretch reads TRTTDSTETADT.

In terms of tissue distribution, heart.

Its function is as follows. May be involved with the regulation of GNRH gene expression. It is not known if this protein is transcribed. In Rattus norvegicus (Rat), this protein is Putative protein SH.